The primary structure comprises 114 residues: ATP synthase subunit beta, mitochondrial (114 aa).

44 to 51 contributes to the ATP binding site; the sequence is GGAGVGKT.

The protein belongs to the ATPase alpha/beta chains family. As to quaternary structure, F-type ATPases have 2 components, CF(1) - the catalytic core - and CF(0) - the membrane proton channel. CF(1) has five subunits: alpha(3), beta(3), gamma(1), delta(1), epsilon(1). CF(0) has three main subunits: a, b and c.

The protein resides in the mitochondrion. It is found in the mitochondrion inner membrane. It catalyses the reaction ATP + H2O + 4 H(+)(in) = ADP + phosphate + 5 H(+)(out). Mitochondrial membrane ATP synthase (F(1)F(0) ATP synthase or Complex V) produces ATP from ADP in the presence of a proton gradient across the membrane which is generated by electron transport complexes of the respiratory chain. F-type ATPases consist of two structural domains, F(1) - containing the extramembraneous catalytic core, and F(0) - containing the membrane proton channel, linked together by a central stalk and a peripheral stalk. During catalysis, ATP synthesis in the catalytic domain of F(1) is coupled via a rotary mechanism of the central stalk subunits to proton translocation. Subunits alpha and beta form the catalytic core in F(1). Rotation of the central stalk against the surrounding alpha(3)beta(3) subunits leads to hydrolysis of ATP in three separate catalytic sites on the beta subunits. The protein is ATP synthase subunit beta, mitochondrial (atp2) of Penicillium glabrum (Penicillium frequentans).